Consider the following 285-residue polypeptide: Glutamate racemase (285 aa).

Residues 28–29 (DS) and 60–61 (YG) contribute to the substrate site. The active-site Proton donor/acceptor is the Cys-92. 93–94 (NT) contacts substrate. The active-site Proton donor/acceptor is the Cys-204. Residue 205 to 206 (TH) participates in substrate binding.

It belongs to the aspartate/glutamate racemases family.

It catalyses the reaction L-glutamate = D-glutamate. It participates in cell wall biogenesis; peptidoglycan biosynthesis. In terms of biological role, provides the (R)-glutamate required for cell wall biosynthesis. The protein is Glutamate racemase of Escherichia coli (strain UTI89 / UPEC).